The primary structure comprises 359 residues: Diacyltrehalose acyltransferase Chp2 (359 aa).

Residues 4–24 form a helical membrane-spanning segment; sequence VIAGAFAVWLVGWAGGFGTAI. In terms of domain architecture, PE-PPE spans 79 to 316; that stretch reads PNAKHDLIDY…VLQPQIDAAY (238 aa).

Belongs to the mycobacterial PPE family.

It is found in the cell inner membrane. Activity is probably potentiated by the DAT/PAT transporter MmpL10. Inhibited by the lipase inhibitor tetrahydrolipstatin (THL). Its function is as follows. Involved in the final steps of polyacyltrehalose (PAT) biosynthesis. Catalyzes the transfer of three mycolipenoyl groups onto diacyltrehalose (DAT) to form PAT. In Mycobacterium tuberculosis (strain ATCC 25618 / H37Rv), this protein is Diacyltrehalose acyltransferase Chp2.